The primary structure comprises 215 residues: Fanconi anemia core complex-associated protein 24 (215 aa).

Belongs to the multisubunit FA complex composed of FANCA, FANCB, FANCC, FANCE, FANCF, FANCG, FANCL/PHF9, FANCM and FAAP24. Interacts with FANCM.

It is found in the nucleus. Its function is as follows. Plays a role in DNA repair through recruitment of the FA core complex to damaged DNA. Regulates FANCD2 monoubiquitination upon DNA damage. Induces chromosomal instability as well as hypersensitivity to DNA cross-linking agents, when repressed. Targets FANCM/FAAP24 complex to the DNA, preferentially to single strand DNA. This chain is Fanconi anemia core complex-associated protein 24, found in Bos taurus (Bovine).